Consider the following 146-residue polypeptide: Superoxide dismutase [Mn] 2 (146 aa).

Mn(2+) contacts are provided by His42, Asp126, and His130.

This sequence belongs to the iron/manganese superoxide dismutase family. It depends on Mn(2+) as a cofactor.

The enzyme catalyses 2 superoxide + 2 H(+) = H2O2 + O2. In terms of biological role, destroys superoxide anion radicals which are normally produced within the cells and which are toxic to biological systems. The sequence is that of Superoxide dismutase [Mn] 2 (sod2) from Haloferax mediterranei (Halobacterium mediterranei).